Here is a 618-residue protein sequence, read N- to C-terminus: UvrABC system protein C (618 aa).

The region spanning 19–97 (SEPGIYRMLD…IKALRPKYNV (79 aa)) is the GIY-YIG domain. The 36-residue stretch at 208–243 (QIILDELAERMKNAVSQLNFEEAAVLRDQIKNLRLI) folds into the UVR domain.

Belongs to the UvrC family. Interacts with UvrB in an incision complex.

It localises to the cytoplasm. Functionally, the UvrABC repair system catalyzes the recognition and processing of DNA lesions. UvrC both incises the 5' and 3' sides of the lesion. The N-terminal half is responsible for the 3' incision and the C-terminal half is responsible for the 5' incision. The chain is UvrABC system protein C from Legionella pneumophila (strain Lens).